A 139-amino-acid polypeptide reads, in one-letter code: GSK3B-interacting protein (139 aa).

Residues valine 41–leucine 45 form a required for PRKAR2A interaction; contributes to a protective effect against H(2)O(2)-induced apoptosis region. The interaction with GSK3B and acts as a GSK3B inhibitor stretch occupies residues serine 115–serine 139.

It belongs to the GSKIP family. In terms of assembly, forms a complex composed of PRKAR2A or PRKAR2B, GSK3B and GSKIP through GSKIP interaction; facilitates PKA-induced phosphorylation of GSK3B leading to GSK3B inactivation; recruits DNM1L through GSK3B for PKA-mediated phosphorylation of DNM1L; promotes beta-catenin degradation through GSK3B-induced phosphorylation of beta-catenin; stabilizes beta-catenin and enhances Wnt-induced signaling through PKA-induced phosphorylation of beta-catenin. Interacts with GSK3B; induces GSK3B-mediated phosphorylation of GSKIP and inhibits GSK3B kinase activity. Phosphorylated by GSK3B.

It localises to the cytoplasm. The protein localises to the nucleus. A-kinase anchoring protein for GSK3B and PKA that regulates or facilitates their kinase activity towards their targets. The ternary complex enhances Wnt-induced signaling by facilitating the GSK3B- and PKA-induced phosphorylation of beta-catenin leading to beta-catenin degradation and stabilization respectively. Upon cAMP activation, the ternary complex contributes to neuroprotection against oxidative stress-induced apoptosis by facilitating the PKA-induced phosphorylation of DML1 and PKA-induced inactivation of GSK3B. During neurite outgrowth promotes neuron proliferation; while increases beta-catenin-induced transcriptional activity through GSK3B kinase activity inhibition, reduces N-cadherin level to promote cell cycle progression. May play a role in cleft palate formation and is required for postnatal life through modulation of the activity of GSK3B during development. The sequence is that of GSK3B-interacting protein from Bos taurus (Bovine).